A 326-amino-acid chain; its full sequence is 4-hydroxythreonine-4-phosphate dehydrogenase (326 aa).

Substrate is bound by residues H130 and T131. A divalent metal cation is bound by residues H160, H205, and H260. K268, N277, and R286 together coordinate substrate.

The protein belongs to the PdxA family. Homodimer. Requires Zn(2+) as cofactor. The cofactor is Mg(2+). It depends on Co(2+) as a cofactor.

It localises to the cytoplasm. It catalyses the reaction 4-(phosphooxy)-L-threonine + NAD(+) = 3-amino-2-oxopropyl phosphate + CO2 + NADH. It participates in cofactor biosynthesis; pyridoxine 5'-phosphate biosynthesis; pyridoxine 5'-phosphate from D-erythrose 4-phosphate: step 4/5. Its function is as follows. Catalyzes the NAD(P)-dependent oxidation of 4-(phosphooxy)-L-threonine (HTP) into 2-amino-3-oxo-4-(phosphooxy)butyric acid which spontaneously decarboxylates to form 3-amino-2-oxopropyl phosphate (AHAP). The chain is 4-hydroxythreonine-4-phosphate dehydrogenase from Aromatoleum aromaticum (strain DSM 19018 / LMG 30748 / EbN1) (Azoarcus sp. (strain EbN1)).